The sequence spans 341 residues: Biotin synthase (341 aa).

A Radical SAM core domain is found at 53–272 (NHVETASLLS…IAVARIMMPK (220 aa)). [4Fe-4S] cluster contacts are provided by Cys68, Cys72, and Cys75. [2Fe-2S] cluster-binding residues include Cys112, Cys143, Cys203, and Arg276.

Belongs to the radical SAM superfamily. Biotin synthase family. Homodimer. It depends on [4Fe-4S] cluster as a cofactor. [2Fe-2S] cluster is required as a cofactor.

The enzyme catalyses (4R,5S)-dethiobiotin + (sulfur carrier)-SH + 2 reduced [2Fe-2S]-[ferredoxin] + 2 S-adenosyl-L-methionine = (sulfur carrier)-H + biotin + 2 5'-deoxyadenosine + 2 L-methionine + 2 oxidized [2Fe-2S]-[ferredoxin]. Its pathway is cofactor biosynthesis; biotin biosynthesis; biotin from 7,8-diaminononanoate: step 2/2. Functionally, catalyzes the conversion of dethiobiotin (DTB) to biotin by the insertion of a sulfur atom into dethiobiotin via a radical-based mechanism. The sequence is that of Biotin synthase from Nitrobacter winogradskyi (strain ATCC 25391 / DSM 10237 / CIP 104748 / NCIMB 11846 / Nb-255).